Reading from the N-terminus, the 195-residue chain is CASP-like protein IN26 (195 aa).

Residues 1–26 (VAPTGSVETEKAGPSYKPKEYYKVTE) are Cytoplasmic-facing. The chain crosses the membrane as a helical span at residues 27-47 (AILRLLLLASLVVAVVVMVTS). The Extracellular segment spans residues 48–75 (KETELISVKLDPFPPFMLPLTAKFTQSP). Residues 76-96 (AFIYFVAGLSVAGLYTIISTL) traverse the membrane as a helical segment. Topologically, residues 97–120 (ASFYNLLIKPGFCPALVSHFIILD) are cytoplasmic. The helical transmembrane segment at 121-143 (VVMLGIVGTATGAAGGVAYIGLK) threads the bilayer. Over 144–163 (GNSHVGWTKVCNKYGKLCTH) the chain is Extracellular. Residues 164–184 (LGASLAVSFFAFIVLLLLIIL) form a helical membrane-spanning segment. Residues 185–195 (SIHSLSKKIPK) lie on the Cytoplasmic side of the membrane.

It belongs to the Casparian strip membrane proteins (CASP) family. As to quaternary structure, homodimer and heterodimers.

The protein resides in the cell membrane. The chain is CASP-like protein IN26 (IN26) from Ipomoea nil (Japanese morning glory).